We begin with the raw amino-acid sequence, 330 residues long: Phenylalanine--tRNA ligase alpha subunit (330 aa).

Residue E246 participates in Mg(2+) binding.

The protein belongs to the class-II aminoacyl-tRNA synthetase family. Phe-tRNA synthetase alpha subunit type 1 subfamily. In terms of assembly, tetramer of two alpha and two beta subunits. Mg(2+) is required as a cofactor.

The protein localises to the cytoplasm. It carries out the reaction tRNA(Phe) + L-phenylalanine + ATP = L-phenylalanyl-tRNA(Phe) + AMP + diphosphate + H(+). This chain is Phenylalanine--tRNA ligase alpha subunit, found in Campylobacter jejuni subsp. doylei (strain ATCC BAA-1458 / RM4099 / 269.97).